A 150-amino-acid chain; its full sequence is Large ribosomal subunit protein bL9 (150 aa).

The protein belongs to the bacterial ribosomal protein bL9 family.

Functionally, binds to the 23S rRNA. The polypeptide is Large ribosomal subunit protein bL9 (Neisseria meningitidis serogroup A / serotype 4A (strain DSM 15465 / Z2491)).